The following is a 363-amino-acid chain: MARSLTILAIVFAVATARVTKSESPKEILAQVNKDSFGNSILSVLQLQLATGGPVGEIQILLNNIASQLNGDQKKADKVHESDTVAFEKIIADLEQEIAYHQTQIVALSNLRDSTTEALGEAEVEVRVVTSDIANNEKSFADESATRQSQHDTWVRKDAEHVDQMEAIDEASKIVQHLQAGVAFAQLKSRFEKVQAKLMESKHALFKPLINALTQLASKVDNKSIIKILELLAQIRQQLVASRASLLATEERQAANWEVQSSHLSEEHKRLVERKAFLENSIVQFKVTIQEAVEDLEDQTLFLEDAEDSLAIQERWAAEQESQYEAQTFEREQQLEVVERLQEVLTQKLSAASEFLQVREEVF.

A signal peptide spans 1–17 (MARSLTILAIVFAVATA). The propeptide occupies 18–52 (RVTKSESPKEILAQVNKDSFGNSILSVLQLQLATG). A coiled-coil region spans residues 85–119 (VAFEKIIADLEQEIAYHQTQIVALSNLRDSTTEAL). Residues 190 to 221 (RFEKVQAKLMESKHALFKPLINALTQLASKVD) constitute a propeptide that is removed on maturation. Residues 244–352 (ASLLATEERQ…EVLTQKLSAA (109 aa)) are a coiled coil.

It belongs to the TMP family. Post-translationally, two components are produced by post-translational processing from the precursor peptide.

It is found in the trichocyst. Structural protein that crystallize inside the trichocyst matrix. This Paramecium tetraurelia protein is Trichocyst matrix protein T4-B (T4B).